The sequence spans 396 residues: Tryptophan synthase beta chain (396 aa).

An N6-(pyridoxal phosphate)lysine modification is found at Lys88.

The protein belongs to the TrpB family. Tetramer of two alpha and two beta chains. It depends on pyridoxal 5'-phosphate as a cofactor.

The enzyme catalyses (1S,2R)-1-C-(indol-3-yl)glycerol 3-phosphate + L-serine = D-glyceraldehyde 3-phosphate + L-tryptophan + H2O. Its pathway is amino-acid biosynthesis; L-tryptophan biosynthesis; L-tryptophan from chorismate: step 5/5. Its function is as follows. The beta subunit is responsible for the synthesis of L-tryptophan from indole and L-serine. The sequence is that of Tryptophan synthase beta chain from Actinobacillus pleuropneumoniae serotype 3 (strain JL03).